The sequence spans 214 residues: uncharacterized protein (214 aa).

Positions 1–24 (MKIWIKAICITSFVIQMSACSSSA) are cleaved as a signal peptide. The TNase-like domain maps to 64–197 (ETVKGKVLHI…KEAKAGVWSI (134 aa)). Active-site residues include Arg91, Glu99, and Arg142.

This is an uncharacterized protein from Bacillus anthracis.